A 281-amino-acid polypeptide reads, in one-letter code: Shikimate dehydrogenase (NADP(+)) (281 aa).

Residues 19–21 and T66 each bind shikimate; that span reads SFS. K70 serves as the catalytic Proton acceptor. Residues N91 and D104 each coordinate shikimate. NADP(+) contacts are provided by residues 127–131 and I223; that span reads GAGGA. A shikimate-binding site is contributed by Y225. G246 lines the NADP(+) pocket.

This sequence belongs to the shikimate dehydrogenase family. As to quaternary structure, homodimer.

The catalysed reaction is shikimate + NADP(+) = 3-dehydroshikimate + NADPH + H(+). It functions in the pathway metabolic intermediate biosynthesis; chorismate biosynthesis; chorismate from D-erythrose 4-phosphate and phosphoenolpyruvate: step 4/7. Functionally, involved in the biosynthesis of the chorismate, which leads to the biosynthesis of aromatic amino acids. Catalyzes the reversible NADPH linked reduction of 3-dehydroshikimate (DHSA) to yield shikimate (SA). The protein is Shikimate dehydrogenase (NADP(+)) of Methanobrevibacter smithii (strain ATCC 35061 / DSM 861 / OCM 144 / PS).